Reading from the N-terminus, the 116-residue chain is Somatostatin (116 aa).

The signal sequence occupies residues Met-1 to Gly-24. The propeptide occupies Leu-35–Arg-88. The residue at position 43 (Thr-43) is a Threonine amide. Cys-105 and Cys-116 form a disulfide bridge.

The protein belongs to the somatostatin family. Post-translationally, C-terminal amidation of the neuronostatin peptide is required for its biological activity, including for the regulation of mean arterial pressure. In the pancreas, somatostatin is expressed in delta cells of the islets of Langerhans. In the stomach, it is expressed in parietal cells of oxyntic mucosa and in the small intestine, it is found in the villus (at protein level). Neuronostatin is expressed in the pancreas in delta cells of the islets of Langerhans, as well as in the stomach, in parietal cells of oxyntic mucosa and in the small intestine, in the villus (at protein level).

The protein resides in the secreted. Its function is as follows. Inhibits the secretion of pituitary hormones, including that of growth hormone/somatotropin (GH1), PRL, ACTH, luteinizing hormone (LH) and TSH. Also impairs ghrelin- and GnRH-stimulated secretion of GH1 and LH; the inhibition of ghrelin-stimulated secretion of GH1 can be further increased by neuronostatin. Functionally, may enhance low-glucose-induced glucagon release by pancreatic alpha cells. This effect may be mediated by binding to GPR107 and PKA activation. May regulate cardiac contractile function. May compromise cardiomyocyte viability. In the central nervous system, may impair memory retention and may affect hippocampal excitability. May also have anxiolytic and anorexigenic effects. May play a role in arterial pressure regulation. May inhibit basal, but not ghrelin- or GnRH-stimulated secretion of GH1 or LH, but does not affect the release of other pituitary hormones, including PRL, ACTH, FSH or TSH. Potentiates inhibitory action of somatostatin on ghrelin-stimulated secretion of GH1, but not that on GnRH-stimulated secretion of LH. In Mus musculus (Mouse), this protein is Somatostatin (Sst).